The chain runs to 438 residues: Fibrous sheath-interacting protein 1 (438 aa).

The interval Met-1–Glu-111 is disordered. The span at Ser-18–Ser-32 shows a compositional bias: low complexity. Residues Ser-53 to Asp-72 show a composition bias toward basic and acidic residues. A phosphoserine mark is found at Ser-71, Ser-88, and Ser-89. Positions Leu-131 to Lys-157 form a coiled coil. Residues Ser-354 to Glu-390 form a disordered region. Basic and acidic residues-rich tracts occupy residues Gly-359 to Thr-371 and Lys-378 to Glu-390.

The protein belongs to the FSIP1 family.

This chain is Fibrous sheath-interacting protein 1 (Fsip1), found in Rattus norvegicus (Rat).